Consider the following 353-residue polypeptide: Phosphate acyltransferase (353 aa).

The protein belongs to the PlsX family. In terms of assembly, homodimer. Probably interacts with PlsY.

The protein localises to the cytoplasm. It catalyses the reaction a fatty acyl-[ACP] + phosphate = an acyl phosphate + holo-[ACP]. It functions in the pathway lipid metabolism; phospholipid metabolism. In terms of biological role, catalyzes the reversible formation of acyl-phosphate (acyl-PO(4)) from acyl-[acyl-carrier-protein] (acyl-ACP). This enzyme utilizes acyl-ACP as fatty acyl donor, but not acyl-CoA. The protein is Phosphate acyltransferase of Rhodopseudomonas palustris (strain ATCC BAA-98 / CGA009).